Here is a 471-residue protein sequence, read N- to C-terminus: MARWPWRWRVLLPLLLLHSSPVFAQEGQDNDPSTLFKRASEMMNLRKYDGSLGLLNAVLEVDPNHSEAYRQRASVLRHKCRYKEAEGDYSKYLELKPGSSSVEKELSQLLQAQNALESAYGQFESHDFSKVLEYINKIVLVFSPNCLKAKLLKAKALLALEDYSSVISETGFILKEDEDNLDALLLRGRAYYYLADHDVASRHYQKGLRLDPEHSELKKAYFGLKNLLKKTKSAEDNAAKGKLRVSAEDYKAALAMDPDHTSYNVHLYLGLCKVLVKLGRGKEAISSCTEALNIDGELVDALTQRGEAKLLTEDWEGAVQDLKEASQKSPQDMGIREALMRAEKQLKLSKRKDWYKILGISKTASAADIKRAYKKLALQWHPDKNVDNREEAENMFREIAAAYEVLGDEDKRVRYDRGEDLDEMNMGGGGGGFNPFGGGGQQYTFHYDGGFYGGGGFPGGGFPGGFQFNFG.

A signal peptide spans 1-24; that stretch reads MARWPWRWRVLLPLLLLHSSPVFA. TPR repeat units lie at residues 32–65, 66–99, 112–146, 148–180, 181–214, 227–260, 265–298, and 300–332; these read PSTL…DPNH, SEAY…KPGS, AQNA…SPNC, KAKL…DEDN, LDAL…DPEH, LLKK…DPDH, VHLY…DGEL, and DALT…SPQD. Asn-64 carries an N-linked (GlcNAc...) asparagine glycan. One can recognise a J domain in the interval 353 to 419; the sequence is DWYKILGISK…DKRVRYDRGE (67 aa).

As to quaternary structure, interacts with BIP1.

It localises to the endoplasmic reticulum lumen. Functionally, may play a role in protein folding in the endoplasmic reticulum. This chain is DnaJ protein P58IPK homolog B, found in Oryza sativa subsp. japonica (Rice).